The chain runs to 841 residues: Rho guanine nucleotide exchange factor 15 (841 aa).

3 disordered regions span residues 1–179 (MSAQ…QARA), 239–261 (RRAS…HPAV), and 279–333 (KPPK…REEE). The span at 39-53 (NGSSPQELPRNSNDA) shows a compositional bias: polar residues. The segment covering 65-110 (PPAASLKPPALLPPSASRASLDSQTSPDSPSSTPTPSPVSRRSASP) has biased composition (low complexity). Phosphoserine occurs at positions 107 and 109. Positions 111 to 124 (EPAPRSPVPPPKPS) are enriched in pro residues. Tyrosine 353 is modified (phosphotyrosine; by EPHB2). Residues 417-601 (RMQESLFEVV…SKIIERCSAE (185 aa)) form the DH domain. The tract at residues 765 to 793 (ESSAPAKTEGRSLESRAAPKHLHKTPEGW) is disordered.

As to quaternary structure, interacts with EPHB2. Interacts with EPHA4. In terms of processing, phosphorylated on tyrosine residues upon EFNA1 stimulation. EPHB2-dependent phosphorylation at Tyr-353 triggers UBE3A-mediated ubiquitination. Post-translationally, ubiquitinated; UBE3A-mediated ubiquitination and degradation by the proteasome promotes EFNB1-dependent synapse formation. As to expression, expressed in the vascular smooth muscle of coronary artery.

The protein resides in the cell projection. It is found in the dendrite. Its function is as follows. Specific GEF for RhoA activation. Does not activate RAC1 or CDC42. Regulates vascular smooth muscle contractility. Negatively regulates excitatory synapse development by suppressing the synapse-promoting activity of EPHB2. This chain is Rho guanine nucleotide exchange factor 15 (ARHGEF15), found in Homo sapiens (Human).